A 709-amino-acid polypeptide reads, in one-letter code: Protein transport protein SEC39 (709 aa).

This sequence belongs to the SEC39 family. As to quaternary structure, component of a peripheral membrane protein complex consisting of DSL1, SEC39/DSL3 and TIP20. Bound to a SNARE complex consisting of UFE1, USE1, SEC20 and SEC22 or YKT6 through direct interaction of TIP20 with SEC20. Interacts with TIP20 and DSL1.

Its subcellular location is the endoplasmic reticulum membrane. Its function is as follows. Required for protein transport between the Golgi and the endoplasmic reticulum. May contribute to tethering of coatomer-coated retrograde transport vesicles to the ER membrane through interaction with and stabilization of the SNARE complex. This is Protein transport protein SEC39 from Saccharomyces cerevisiae (strain ATCC 204508 / S288c) (Baker's yeast).